A 558-amino-acid polypeptide reads, in one-letter code: Protein SET DOMAIN GROUP 41 (558 aa).

An SET domain is found at 115–249 (PSISVAIHHA…SGEEITVSYI (135 aa)).

This sequence belongs to the class V-like SAM-binding methyltransferase superfamily.

This chain is Protein SET DOMAIN GROUP 41 (SDG41), found in Arabidopsis thaliana (Mouse-ear cress).